The following is a 226-amino-acid chain: Enolase-phosphatase E1 (226 aa).

This sequence belongs to the HAD-like hydrolase superfamily. MasA/MtnC family. In terms of assembly, monomer. Mg(2+) is required as a cofactor.

The catalysed reaction is 5-methylsulfanyl-2,3-dioxopentyl phosphate + H2O = 1,2-dihydroxy-5-(methylsulfanyl)pent-1-en-3-one + phosphate. It functions in the pathway amino-acid biosynthesis; L-methionine biosynthesis via salvage pathway; L-methionine from S-methyl-5-thio-alpha-D-ribose 1-phosphate: step 3/6. Its pathway is amino-acid biosynthesis; L-methionine biosynthesis via salvage pathway; L-methionine from S-methyl-5-thio-alpha-D-ribose 1-phosphate: step 4/6. In terms of biological role, bifunctional enzyme that catalyzes the enolization of 2,3-diketo-5-methylthiopentyl-1-phosphate (DK-MTP-1-P) into the intermediate 2-hydroxy-3-keto-5-methylthiopentenyl-1-phosphate (HK-MTPenyl-1-P), which is then dephosphorylated to form the acireductone 1,2-dihydroxy-3-keto-5-methylthiopentene (DHK-MTPene). The chain is Enolase-phosphatase E1 from Shewanella sp. (strain MR-4).